A 413-amino-acid polypeptide reads, in one-letter code: MNIIKELEWRGLVKQITNEERLLKAQNDGAAVYCGFDPTADSLHVGHLMMIVTLKRFDKAGFQAIGLIGGGTGMIGDPSFKADERKLQTDEQVKFHATAIQNQLLRIIPDVTFANNVDWLGNMSLIDFLRDVGKDFNISYLLNKDSIATRISTGLSVTEFSYTMLQAYDFYNLYINHNCKVQIGGSDQWGNITSGTDYISTRVGSANTEAAGFTIPLLTKSDGQKFGKTESGAVWLDSNKTSVYDFYQFWINQDDNDCVKMLKYLTFLTKEEIDELEAKHKEAPHLRTMQKTLASEITKFVHGDKELNKAIKLTDAFFTGNILNLDDDLLELAIKSIPTIQLEKTTSAIDAIVNVNAASSKREAREFINAKAISFNDVAVQDENMLLSEIKTIKNNKIIVKKGKKKYYLLEIK.

Y33 provides a ligand contact to L-tyrosine. Positions 38 to 47 (PTADSLHVGH) match the 'HIGH' region motif. 2 residues coordinate L-tyrosine: Y162 and Q166. The short motif at 225-229 (KFGKT) is the 'KMSKS' region element. ATP is bound at residue K228. Positions 346-413 (TSAIDAIVNV…KKKYYLLEIK (68 aa)) constitute an S4 RNA-binding domain.

This sequence belongs to the class-I aminoacyl-tRNA synthetase family. TyrS type 1 subfamily. As to quaternary structure, homodimer.

The protein localises to the cytoplasm. It catalyses the reaction tRNA(Tyr) + L-tyrosine + ATP = L-tyrosyl-tRNA(Tyr) + AMP + diphosphate + H(+). In terms of biological role, catalyzes the attachment of tyrosine to tRNA(Tyr) in a two-step reaction: tyrosine is first activated by ATP to form Tyr-AMP and then transferred to the acceptor end of tRNA(Tyr). This Mesoplasma florum (strain ATCC 33453 / NBRC 100688 / NCTC 11704 / L1) (Acholeplasma florum) protein is Tyrosine--tRNA ligase.